The primary structure comprises 484 residues: UDP-glycosyltransferase 73B4 (484 aa).

Histidine 18 (proton acceptor) is an active-site residue. The an anthocyanidin site is built by histidine 18 and asparagine 89. The active-site Charge relay is aspartate 129. The UDP-alpha-D-glucose site is built by alanine 356, glutamine 358, histidine 373, tryptophan 376, asparagine 377, serine 378, and glutamate 381. Alanine 396 is a binding site for an anthocyanidin. 2 residues coordinate UDP-alpha-D-glucose: glutamate 397 and glutamine 398.

It belongs to the UDP-glycosyltransferase family. Specifically expressed in roots.

The catalysed reaction is a flavonol + UDP-alpha-D-glucose = a flavonol 3-O-beta-D-glucoside + UDP + H(+). Its function is as follows. Possesses quercetin 3-O-glucosyltransferase and low 7-O-glucosyltransferase activities in vitro. Also active in vitro on benzoates and benzoate derivatives. Can detoxify the explosive 2,4,6-trinitrotoluene in plant by forming O- or C-glucose conjugates. This Arabidopsis thaliana (Mouse-ear cress) protein is UDP-glycosyltransferase 73B4 (UGT73B4).